The sequence spans 738 residues: MDPFFLNTQHVELLVSGKQSSPQDLLGIVSESLNQDRIVLFRPGAETVFVELRGKIQQAESHHSGIFSLPVMKGISPQDYRVYHQNGLLAHDPYAFPLLWGEIDSFLFHEGTHQRIYERMGAIPCEIDGVPGVRFIVWAPHAQRVSVIGDFNGWHGLVNPLHKVSDQGVWELFVPGLTAGACYKWEMVTESGQVLIKSDPYGKFFGPPPRSVSVVIDDSYEWTDSEWLEERIKKTEGPMNIYEVHVGSWRWQEGQPLNYRELADQLALYCKQMHYTHVELLPVTEHPLNESWGYQTTGYYAPTSRYGSFEDLQYFIDTMHQHGIGVILDWVPGHFPIDSFAMSGFDGTPLYEYTRNPSPLHPHWHTYTFDYAKPEVCNFLLGSVLFWIDKMHVDGIRVDAVSSMLYLDYGRYAGEWVPNRYGGRENLDAIRFLQQFNTVIHEKYPGVLTFAEESTTFPKITVSVEEGGLGFDYKWNMGWMHDTLHYFEKDFPYRPYHQSDLTFPQWYAFSERFLLPFSHDEVVHGKRSLIGKMPGDAWRQFAQLRLLLGYQICQPGKKLLFMGGEFGQGREWSPGRELDWELLDISYHQGVHLCSQELNALYVQSPQLWQADHLPSSFRWVDFSDVRNGVVAYLRFADADAKKALLCVHHFGVGYFPHYLLPILPLESCDLLMNTDDTRFGGSGKGFREPEILTPEIARQEREAAGLIEADDESGPDCWGLDIELPPSATLIFSVTLQ.

Aspartate 399 serves as the catalytic Nucleophile. The active-site Proton donor is glutamate 452.

It belongs to the glycosyl hydrolase 13 family. GlgB subfamily. Monomer.

The enzyme catalyses Transfers a segment of a (1-&gt;4)-alpha-D-glucan chain to a primary hydroxy group in a similar glucan chain.. The protein operates within glycan biosynthesis; glycogen biosynthesis. In terms of biological role, catalyzes the formation of the alpha-1,6-glucosidic linkages in glycogen by scission of a 1,4-alpha-linked oligosaccharide from growing alpha-1,4-glucan chains and the subsequent attachment of the oligosaccharide to the alpha-1,6 position. This chain is 1,4-alpha-glucan branching enzyme GlgB, found in Chlamydia trachomatis serovar A (strain ATCC VR-571B / DSM 19440 / HAR-13).